The chain runs to 64 residues: MAVQQNRKTRSKRGMRRSHDALSASALSVEANTGETHLRHHVSPDGYYRGRRVIAPKHGDETEE.

A disordered region spans residues 1–64 (MAVQQNRKTR…APKHGDETEE (64 aa)). Basic residues predominate over residues 7–16 (RKTRSKRGMR).

The protein belongs to the bacterial ribosomal protein bL32 family.

This Methylococcus capsulatus (strain ATCC 33009 / NCIMB 11132 / Bath) protein is Large ribosomal subunit protein bL32.